Here is a 337-residue protein sequence, read N- to C-terminus: Trace amine-associated receptor 5 (337 aa).

At 1–38 the chain is on the extracellular side; the sequence is MRAVLLPGSGEQPAAFCYQVNGSCPRTVHPLAIRVLIY. Residue Asn-21 is glycosylated (N-linked (GlcNAc...) asparagine). Disulfide bonds link Cys-24/Cys-188 and Cys-99/Cys-192. The chain crosses the membrane as a helical span at residues 39-59; it reads LACAVGMLITVLGNLFVVFAV. At 60–70 the chain is on the cytoplasmic side; it reads SYFKVLHTPTN. A helical membrane pass occupies residues 71–91; it reads FLLLSLALADMLLGLLVLPLS. Over 92-109 the chain is Extracellular; the sequence is TVRSVESCWFFGDFLCRL. A helical transmembrane segment spans residues 110–130; that stretch reads HTYLDTLFCLTSIFHLCFISI. The Cytoplasmic segment spans residues 131–154; it reads DRHCAICDPLLYPSKFTVRIALRY. The chain crosses the membrane as a helical span at residues 155–175; it reads IAAGWGIPAAYTAFFLYTDVV. The interval 176–189 is extracellular Loop 2 (ECL2); it reads ERALSQWLEEMPCV. The Extracellular segment spans residues 176–204; the sequence is ERALSQWLEEMPCVGSCQLLFNKFWGWLN. A helical transmembrane segment spans residues 205-225; it reads FPAFFIPCLIMISLYLKIFVV. The Cytoplasmic segment spans residues 226-253; it reads ATRQAQQIRTLSQSLSGAVKRERKAAKT. The helical transmembrane segment at 254-274 threads the bilayer; that stretch reads LGIAVGIYLVCWLPFTVDTLV. The Extracellular portion of the chain corresponds to 275 to 284; the sequence is DSLLNFVTPP. Residues 285–307 form a helical membrane-spanning segment; the sequence is LVFDIFIWFAYFNSACNPIIYVF. The Cytoplasmic segment spans residues 308–337; sequence SYRWFRKALKLLLSREILSPRTQTADLFHD.

This sequence belongs to the G-protein coupled receptor 1 family.

It is found in the cell membrane. Olfactory receptor specific for trimethylamine, a trace amine enriched in the urine of male rats, playing a role in social behavior. Also activated by N-methylpiperidine. Trimethylamine is present at high concentration in the urine of male after puberty and acts as an attractant. Trimethylamine-binding causes a conformation change that triggers signaling via G(s)-class of G alpha proteins (GNAL or GNAS). Also required to provide olfactory input into limbic brain areas to regulate emotional behaviors likely via modulation of the serotonin system. The polypeptide is Trace amine-associated receptor 5 (Rattus norvegicus (Rat)).